The sequence spans 350 residues: Twinfilin-1 (350 aa).

N-acetylserine is present on Ser2. The ADF-H 1 domain maps to 2–139; the sequence is SHQTGIQASE…SLHGYKKYLL (138 aa). Ser143 and Ser277 each carry phosphoserine. The ADF-H 2 domain occupies 175 to 313; that stretch reads LQGVAFPISR…TADFLYEEVH (139 aa). A Phosphotyrosine modification is found at Tyr309. Residues 316-350 are disordered; it reads QHAHKQSFAKPKGPAGKRGIRRLIRGPAETEATTD. Residue Thr349 is modified to Phosphothreonine.

This sequence belongs to the actin-binding proteins ADF family. Twinfilin subfamily. Interacts with G-actin; ADP-actin form and capping protein (CP). May also be able to interact with TWF2 and phosphoinositides, PI(4,5)P2. When bound to PI(4,5)P2, it is down-regulated. Interacts with ACTG1. Phosphorylated on serine and threonine residues. As to expression, expressed at high levels in the colon, testis, ovary, prostate and lung. Expressed at lower levels in the brain, bladder and heart. Not detected in liver.

It localises to the cytoplasm. The protein localises to the cytoskeleton. Functionally, actin-binding protein involved in motile and morphological processes. Inhibits actin polymerization, likely by sequestering G-actin. By capping the barbed ends of filaments, it also regulates motility. Seems to play an important role in clathrin-mediated endocytosis and distribution of endocytic organelles. This Homo sapiens (Human) protein is Twinfilin-1 (TWF1).